The following is a 630-amino-acid chain: tRNA uridine 5-carboxymethylaminomethyl modification enzyme MnmG (630 aa).

15-20 (GAGHAG) is an FAD binding site. NAD(+) is bound at residue 276 to 290 (GPRYCPSIEDKIVRF).

Belongs to the MnmG family. As to quaternary structure, homodimer. Heterotetramer of two MnmE and two MnmG subunits. FAD serves as cofactor.

It is found in the cytoplasm. Its function is as follows. NAD-binding protein involved in the addition of a carboxymethylaminomethyl (cmnm) group at the wobble position (U34) of certain tRNAs, forming tRNA-cmnm(5)s(2)U34. The chain is tRNA uridine 5-carboxymethylaminomethyl modification enzyme MnmG from Latilactobacillus sakei subsp. sakei (strain 23K) (Lactobacillus sakei subsp. sakei).